The sequence spans 200 residues: Sec-independent protein translocase protein TatB (200 aa).

The chain crosses the membrane as a helical span at residues 2 to 22 (LPDIGGTELLIIAAVALIVVG). The interval 160 to 200 (KAPRKRASQKQEITVEAPKAVRAPRKRASKAGDSTASDIVS) is disordered. Positions 191 to 200 (GDSTASDIVS) are enriched in polar residues.

Belongs to the TatB family. In terms of assembly, the Tat system comprises two distinct complexes: a TatABC complex, containing multiple copies of TatA, TatB and TatC subunits, and a separate TatA complex, containing only TatA subunits. Substrates initially bind to the TatABC complex, which probably triggers association of the separate TatA complex to form the active translocon.

The protein resides in the cell inner membrane. Part of the twin-arginine translocation (Tat) system that transports large folded proteins containing a characteristic twin-arginine motif in their signal peptide across membranes. Together with TatC, TatB is part of a receptor directly interacting with Tat signal peptides. TatB may form an oligomeric binding site that transiently accommodates folded Tat precursor proteins before their translocation. This Caulobacter vibrioides (strain ATCC 19089 / CIP 103742 / CB 15) (Caulobacter crescentus) protein is Sec-independent protein translocase protein TatB.